The sequence spans 725 residues: Heme/hemopexin utilization protein C (725 aa).

Positions 1-21 (MRFSKLSLAIATTLVTANALA) are cleaved as a signal peptide. The TBDR plug domain occupies 36 to 147 (DPSRFAYTPE…LGGVVAMRTP (112 aa)). In terms of domain architecture, TBDR beta-barrel spans 158-725 (KFGVKIRQGY…NAKISAVYSF (568 aa)). A TonB C-terminal box motif is present at residues 708-725 (SLMEGTGRNAKISAVYSF).

It belongs to the TonB-dependent receptor family.

It is found in the cell outer membrane. Required for utilization of free heme at low concentrations. The protein is Heme/hemopexin utilization protein C (hxuC) of Haemophilus influenzae.